We begin with the raw amino-acid sequence, 225 residues long: 7-cyano-7-deazaguanine synthase (225 aa).

9–19 serves as a coordination point for ATP; that stretch reads YSGGLDSTTCL. 4 residues coordinate Zn(2+): Cys-188, Cys-198, Cys-201, and Cys-204.

It belongs to the QueC family. Zn(2+) serves as cofactor.

It catalyses the reaction 7-carboxy-7-deazaguanine + NH4(+) + ATP = 7-cyano-7-deazaguanine + ADP + phosphate + H2O + H(+). Its pathway is purine metabolism; 7-cyano-7-deazaguanine biosynthesis. In terms of biological role, catalyzes the ATP-dependent conversion of 7-carboxy-7-deazaguanine (CDG) to 7-cyano-7-deazaguanine (preQ(0)). In Geobacter sp. (strain M21), this protein is 7-cyano-7-deazaguanine synthase.